A 216-amino-acid chain; its full sequence is Homologous-pairing protein 2 (216 aa).

It belongs to the HOP2 family. As to quaternary structure, interacts with mcp7.

The protein localises to the nucleus. In terms of biological role, required for proper homologous pairing and efficient cross-over and intragenic recombination during meiosis. Acts indirectly in a process facilitating homologous recombination. Acts during mid- to late-horse-tail period. The protein is Homologous-pairing protein 2 (meu13) of Schizosaccharomyces pombe (strain 972 / ATCC 24843) (Fission yeast).